The chain runs to 278 residues: Undecaprenyl-diphosphatase 3 (278 aa).

Helical transmembrane passes span 42–62, 88–108, 119–139, 187–207, 224–244, and 254–274; these read DITA…LLYF, YRFG…GVAF, LWFV…ADHV, VAVT…AAAL, ATII…AWLL, and VFIG…ATGI.

It belongs to the UppP family.

It is found in the cell membrane. It catalyses the reaction di-trans,octa-cis-undecaprenyl diphosphate + H2O = di-trans,octa-cis-undecaprenyl phosphate + phosphate + H(+). In terms of biological role, catalyzes the dephosphorylation of undecaprenyl diphosphate (UPP). Confers resistance to bacitracin. The protein is Undecaprenyl-diphosphatase 3 of Frankia casuarinae (strain DSM 45818 / CECT 9043 / HFP020203 / CcI3).